The following is a 490-amino-acid chain: Phosphoglucosamine mutase (490 aa).

The active-site Phosphoserine intermediate is the serine 139. Mg(2+) contacts are provided by serine 139, aspartate 279, aspartate 281, and aspartate 283. Serine 139 is modified (phosphoserine).

It belongs to the phosphohexose mutase family. It depends on Mg(2+) as a cofactor. Post-translationally, activated by phosphorylation.

It catalyses the reaction alpha-D-glucosamine 1-phosphate = D-glucosamine 6-phosphate. Its function is as follows. Catalyzes the conversion of glucosamine-6-phosphate to glucosamine-1-phosphate. This Nostoc punctiforme (strain ATCC 29133 / PCC 73102) protein is Phosphoglucosamine mutase.